Here is a 662-residue protein sequence, read N- to C-terminus: Polyunsaturated fatty acid lipoxygenase ALOX15 (662 aa).

Residues 2 to 114 (GLYRIRVSTG…VLSLPEGTGR (113 aa)) form the PLAT domain. A Lipoxygenase domain is found at 115–662 (TVGEDPQGLF…PSVVENSVAI (548 aa)). Fe cation is bound by residues histidine 360, histidine 365, histidine 540, histidine 544, and isoleucine 662.

It belongs to the lipoxygenase family. Interacts with PEBP1; in response to IL13/interleukin-13, prevents the interaction of PEBP1 with RAF1 to activate the ERK signaling cascade. Fe cation serves as cofactor. In terms of tissue distribution, detected in monocytes and eosinophils (at protein level). Expressed in airway epithelial cells.

The protein resides in the cytoplasm. It localises to the cytosol. Its subcellular location is the cell membrane. It is found in the lipid droplet. The enzyme catalyses (5Z,8Z,11Z,14Z)-eicosatetraenoate + O2 = (12S)-hydroperoxy-(5Z,8Z,10E,14Z)-eicosatetraenoate. The catalysed reaction is (5Z,8Z,11Z,14Z)-eicosatetraenoate + O2 = (15S)-hydroperoxy-(5Z,8Z,11Z,13E)-eicosatetraenoate. It catalyses the reaction (9Z,12Z)-octadecadienoate + O2 = (13S)-hydroperoxy-(9Z,11E)-octadecadienoate. It carries out the reaction (5Z,8Z,11Z,14Z)-eicosatetraenoate + 2 O2 = (14R,15S)-dihydroperoxy-(5Z,8Z,10E,12E)-eicosatetraenoate. The enzyme catalyses (5Z,8Z,11Z,14Z)-eicosatetraenoate + 2 O2 = (8S,15S)-dihydroperoxy-(5Z,9E,11Z,13E)-eicosatetraenoate. The catalysed reaction is (14S,15R)-epoxy-(5Z,8Z,11Z)-eicosatrienoate + O2 = (8S)-hydroperoxy-(14S,15R)-epoxy-(5Z,9E,11Z)-eicosatrienoate. It catalyses the reaction (14S,15R)-epoxy-(5Z,8Z,11Z)-eicosatrienoate + O2 = (12S)-hydroperoxy-(14S,15R)-epoxy-(5Z,8Z,10E)-eicosatrienoate. It carries out the reaction (14R,15S)-epoxy-(5Z,8Z,11Z)-eicosatrienoate + O2 = (5S)-hydroperoxy-(14R,15S)-epoxy-(6E,8Z,11Z)-eicosatrienoate. The enzyme catalyses (14R,15S)-epoxy-(5Z,8Z,11Z)-eicosatrienoate + O2 = (12S)-hydroperoxy-(14R,15S)-epoxy-(5Z,8Z,10E)-eicosatrienoate. The catalysed reaction is (15R)-hydroperoxy-(5Z,8Z,11Z,13E)-eicosatetraenoate = 15-oxo-(5Z,8Z,11Z,13E)-eicosatetraenoate + H2O. It catalyses the reaction (15S)-hydroperoxy-(5Z,8Z,11Z,13E)-eicosatetraenoate = (14S,15S)-epoxy-(5Z,8Z,10E,12E)-eicosatetraenoate + H2O. It carries out the reaction (12S)-hydroperoxy-(5Z,8Z,10E,14Z)-eicosatetraenoate = (8S)-hydroxy-(11S,12S)-epoxy-(5Z,9E,14Z)-eicosatrienoate. The enzyme catalyses (4Z,7Z,10Z,13Z,16Z,19Z)-docosahexaenoate + O2 = (14S)-hydroperoxy-(4Z,7Z,10Z,12E,16Z,19Z)-docosahexaenoate. The catalysed reaction is (4Z,7Z,10Z,13Z,16Z,19Z)-docosahexaenoate + O2 = (17S)-hydroperoxy-(4Z,7Z,10Z,13Z,15E,19Z)-docosahexaenoate. It catalyses the reaction (7S)-hydroperoxy-(4Z,8E,10Z,13Z,16Z,19Z)-docosahexaenoate + O2 = (7S,14S)-dihydroperoxy-(4Z,8E,10Z,12E,16Z,19Z)-docosahexaenoate. It carries out the reaction (7S)-hydroperoxy-(4Z,8E,10Z,13Z,16Z,19Z)-docosahexaenoate + O2 = (7S,17S)-dihydroperoxy-(4Z,8E,10Z,13Z,15E,19Z)-docosahexaenoate. The enzyme catalyses (4Z,7Z,10Z,13Z,16Z,19Z)-docosahexaenoate + O2 = (11S)-hydroperoxy-(4Z,7Z,9E,13Z,16Z,19Z)-docosahexaenoate. The catalysed reaction is (7Z,10Z,13Z,16Z,19Z)-docosapentaenoate + O2 = 14-hydroperoxy-(7Z,10Z,12E,16Z,19Z)-docosapentaenoate. It catalyses the reaction (4Z,7Z,10Z,13Z,16Z)-docosapentaenoate + O2 = 14-hydroperoxy-(4Z,7Z,10Z,12E,16Z)-docosapentaenoate. It carries out the reaction N-(5Z,8Z,11Z,14Z)-eicosatetraenoyl-taurine + O2 = N-(12S)-hydroperoxy-(5Z,8Z,10E,14Z)-eicosatetraenoyl-taurine. The enzyme catalyses N-(5Z,8Z,11Z,14Z)-eicosatetraenoyl-gamma-aminobutanoate + O2 = N-(12S)-hydroperoxy-(5Z,8Z,10E,14Z)-eicosatetraenoyl-gamma-aminobutanoate. The catalysed reaction is N-(5Z,8Z,11Z,14Z)-eicosatetraenoyl-glycine + O2 = N-(12S)-hydroperoxy-(5Z,8Z,10E,14Z)-eicosatetraenoyl-glycine. It catalyses the reaction N-(5Z,8Z,11Z,14Z)-eicosatetraenoyl-L-alanine + O2 = N-(12S)-hydroperoxy-(5Z,8Z,10E,14Z)-eicosatetraenoyl-alanine. It carries out the reaction N-(5Z,8Z,11Z,14Z)-eicosatetraenoyl-taurine + O2 = N-(15S)-hydroperoxy-(5Z,8Z,11Z,13E)-eicosatetraenoyl-taurine. The enzyme catalyses N-(5Z,8Z,11Z,14Z)-eicosatetraenoyl-gamma-aminobutanoate + O2 = N-(15S)-hydroperoxy-(5Z,8Z,11Z,13E)-eicosatetraenoyl-gamma-aminobutanoate. The catalysed reaction is N-(5Z,8Z,11Z,14Z)-eicosatetraenoyl-glycine + O2 = N-(15S)-hydroperoxy-(5Z,8Z,11Z,13E)-eicosatetraenoyl-glycine. It catalyses the reaction N-(5Z,8Z,11Z,14Z)-eicosatetraenoyl-L-alanine + O2 = N-(15S)-hydroperoxy-(5Z,8Z,11Z,13E)-eicosatetraenoyl-alanine. It functions in the pathway lipid metabolism; hydroperoxy eicosatetraenoic acid biosynthesis. Its activity is regulated as follows. Activity is increased by binding phosphatidylinositol phosphates, especially phosphatidylinositol 3,4-bisphosphate and phosphatidylinositol 4,5-bisphosphate. Inactivated at 37 degrees Celsius by (13S)-hydroperoxy-(9Z,11E)-octadecadienoate. Functionally, non-heme iron-containing dioxygenase that catalyzes the stereo-specific peroxidation of free and esterified polyunsaturated fatty acids generating a spectrum of bioactive lipid mediators. It inserts peroxyl groups at C12 or C15 of arachidonate ((5Z,8Z,11Z,14Z)-eicosatetraenoate) producing both 12-hydroperoxyeicosatetraenoate/12-HPETE and 15-hydroperoxyeicosatetraenoate/15-HPETE. It may then act on 12-HPETE to produce hepoxilins, which may show pro-inflammatory properties. Can also peroxidize linoleate ((9Z,12Z)-octadecadienoate) to 13-hydroperoxyoctadecadienoate/13-HPODE. May participate in the sequential oxidations of DHA ((4Z,7Z,10Z,13Z,16Z,19Z)-docosahexaenoate) to generate specialized pro-resolving mediators (SPMs)like resolvin D5 ((7S,17S)-diHPDHA) and (7S,14S)-diHPDHA, that actively down-regulate the immune response and have anti-aggregation properties with platelets. Can convert epoxy fatty acids to hydroperoxy-epoxides derivatives followed by an intramolecular nucleophilic substitution leading to the formation of monocyclic endoperoxides. Plays an important role during the maintenance of self-tolerance by peroxidizing membrane-bound phosphatidylethanolamine which can then signal the sorting process for clearance of apoptotic cells during inflammation and prevent an autoimmune response. In addition to its role in the immune and inflammatory responses, this enzyme may play a role in epithelial wound healing in the cornea through production of lipoxin A4 (LXA(4)) and docosahexaenoic acid-derived neuroprotectin D1 (NPD1; 10R,17S-HDHA), both lipid autacoids exhibit anti-inflammatory and neuroprotective properties. Furthermore, it may regulate actin polymerization which is crucial for several biological processes such as the phagocytosis of apoptotic cells. It is also implicated in the generation of endogenous ligands for peroxisome proliferator activated receptor (PPAR-gamma), hence modulating macrophage development and function. It may also exert a negative effect on skeletal development by regulating bone mass through this pathway. As well as participates in ER stress and downstream inflammation in adipocytes, pancreatic islets, and liver. Finally, it is also involved in the cellular response to IL13/interleukin-13. The chain is Polyunsaturated fatty acid lipoxygenase ALOX15 from Homo sapiens (Human).